We begin with the raw amino-acid sequence, 586 residues long: Arginine--tRNA ligase (586 aa).

The 'HIGH' region signature appears at 128-138 (ANPTGPLHVGH).

This sequence belongs to the class-I aminoacyl-tRNA synthetase family. Monomer.

The protein localises to the cytoplasm. The enzyme catalyses tRNA(Arg) + L-arginine + ATP = L-arginyl-tRNA(Arg) + AMP + diphosphate. The polypeptide is Arginine--tRNA ligase (Coxiella burnetii (strain RSA 331 / Henzerling II)).